Here is a 432-residue protein sequence, read N- to C-terminus: Gamma-glutamyl phosphate reductase (432 aa).

The protein belongs to the gamma-glutamyl phosphate reductase family.

It localises to the cytoplasm. It carries out the reaction L-glutamate 5-semialdehyde + phosphate + NADP(+) = L-glutamyl 5-phosphate + NADPH + H(+). It participates in amino-acid biosynthesis; L-proline biosynthesis; L-glutamate 5-semialdehyde from L-glutamate: step 2/2. Its function is as follows. Catalyzes the NADPH-dependent reduction of L-glutamate 5-phosphate into L-glutamate 5-semialdehyde and phosphate. The product spontaneously undergoes cyclization to form 1-pyrroline-5-carboxylate. The sequence is that of Gamma-glutamyl phosphate reductase from Brachyspira hyodysenteriae (strain ATCC 49526 / WA1).